Consider the following 530-residue polypeptide: uncharacterized protein (530 aa).

This is an uncharacterized protein from Acanthamoeba polyphaga (Amoeba).